The chain runs to 305 residues: UDP-3-O-acyl-N-acetylglucosamine deacetylase (305 aa).

The Zn(2+) site is built by histidine 78, histidine 237, and aspartate 241. Histidine 264 serves as the catalytic Proton donor.

The protein belongs to the LpxC family. Zn(2+) serves as cofactor.

The enzyme catalyses a UDP-3-O-[(3R)-3-hydroxyacyl]-N-acetyl-alpha-D-glucosamine + H2O = a UDP-3-O-[(3R)-3-hydroxyacyl]-alpha-D-glucosamine + acetate. It functions in the pathway glycolipid biosynthesis; lipid IV(A) biosynthesis; lipid IV(A) from (3R)-3-hydroxytetradecanoyl-[acyl-carrier-protein] and UDP-N-acetyl-alpha-D-glucosamine: step 2/6. In terms of biological role, catalyzes the hydrolysis of UDP-3-O-myristoyl-N-acetylglucosamine to form UDP-3-O-myristoylglucosamine and acetate, the committed step in lipid A biosynthesis. The sequence is that of UDP-3-O-acyl-N-acetylglucosamine deacetylase from Burkholderia ambifaria (strain ATCC BAA-244 / DSM 16087 / CCUG 44356 / LMG 19182 / AMMD) (Burkholderia cepacia (strain AMMD)).